A 196-amino-acid chain; its full sequence is MADGQMPFPCHYTSRRRRDPFRDSPLSSRLLDDGFGMDPFPDDLTASWPDWALPRLSSAWPGTLRSGMVPRGPTAMTRFGVPAEGRSPPPFPGEPWKVCVNVHSFKPEELMVKTKDGYVEVSGKHEEKQQEGGIVSKNFTKKIQLPAEVDPVTVFASLSPEGLLIIEAPQVPPYSPFGESSFNNELPQDGQEVTCT.

A disordered region spans residues 1-34 (MADGQMPFPCHYTSRRRRDPFRDSPLSSRLLDDG). A compositionally biased stretch (low complexity) spans 23 to 34 (DSPLSSRLLDDG). A phosphoserine mark is found at serine 24 and serine 57. Threonine 63 carries the phosphothreonine modification. Residues arginine 71 and arginine 78 each carry the asymmetric dimethylarginine modification. In terms of domain architecture, sHSP spans 74-185 (TAMTRFGVPA…PFGESSFNNE (112 aa)). A Phosphoserine modification is found at serine 87. Residues 176–196 (PFGESSFNNELPQDGQEVTCT) form a disordered region. Positions 178 to 196 (GESSFNNELPQDGQEVTCT) are enriched in polar residues.

The protein belongs to the small heat shock protein (HSP20) family. In terms of assembly, monomer. Forms a ternary complex with BAG3 and HSPA1A. Component of the chaperone-assisted selective autophagy (CASA) complex consisting of BAG3, HSPA8/HSC70, HSPB8 and STUB1/CHIP. Interacts with HSPB1. Interacts with DNAJB6. Interacts with BAG3. Post-translationally, phosphorylated.

It is found in the cytoplasm. It localises to the nucleus. Functionally, involved in the chaperone-assisted selective autophagy (CASA), a crucial process for protein quality control, particularly in mechanical strained cells and tissues such as muscle. Displays temperature-dependent chaperone activity. This is Heat shock protein beta-8 (HSPB8) from Bos taurus (Bovine).